A 107-amino-acid polypeptide reads, in one-letter code: UPF0145 protein PM1668 (107 aa).

The protein belongs to the UPF0145 family.

The sequence is that of UPF0145 protein PM1668 from Pasteurella multocida (strain Pm70).